We begin with the raw amino-acid sequence, 406 residues long: Cysteine desulfurase (406 aa).

At lysine 226 the chain carries N6-(pyridoxal phosphate)lysine. Catalysis depends on cysteine 364, which acts as the Cysteine persulfide intermediate.

Belongs to the class-V pyridoxal-phosphate-dependent aminotransferase family. Csd subfamily. As to quaternary structure, homodimer. Interacts with SufE and the SufBCD complex composed of SufB, SufC and SufD. The interaction with SufE is required to mediate the direct transfer of the sulfur atom from the S-sulfanylcysteine. The cofactor is pyridoxal 5'-phosphate.

It is found in the cytoplasm. The enzyme catalyses (sulfur carrier)-H + L-cysteine = (sulfur carrier)-SH + L-alanine. It catalyses the reaction L-selenocysteine + AH2 = hydrogenselenide + L-alanine + A + H(+). Its pathway is cofactor biosynthesis; iron-sulfur cluster biosynthesis. In terms of biological role, cysteine desulfurases mobilize the sulfur from L-cysteine to yield L-alanine, an essential step in sulfur metabolism for biosynthesis of a variety of sulfur-containing biomolecules. Component of the suf operon, which is activated and required under specific conditions such as oxidative stress and iron limitation. Acts as a potent selenocysteine lyase in vitro, that mobilizes selenium from L-selenocysteine. Selenocysteine lyase activity is however unsure in vivo. This is Cysteine desulfurase from Shigella sonnei (strain Ss046).